The following is a 517-amino-acid chain: Forkhead box protein N4 (517 aa).

Positions 193 to 289 form a DNA-binding region, fork-head; that stretch reads KPIYSYSCLI…EEMHKWKRKD (97 aa). 2 disordered regions span residues 365-398 and 497-517; these read VQPQ…LPHP and SGTS…IALL.

It is found in the nucleus. Its function is as follows. Transcription factor essential for neural and some non-neural tissues development, such as retina and lung respectively. Binds to an 11-bp consensus sequence containing the invariant tetranucleotide 5'-ACGC-3'. During development of the central nervous system, is required to specify the amacrine and horizontal cell fates from multipotent retinal progenitors while suppressing the alternative photoreceptor cell fates through activating DLL4-NOTCH signaling. Also acts synergistically with ASCL1/MASH1 to activate DLL4-NOTCH signaling and drive commitment of p2 progenitors to the V2b interneuron fates during spinal cord neurogenesis. In development of non-neural tissues, plays an essential role in the specification of the atrioventricular canal and is indirectly required for patterning the distal airway during lung development. This is Forkhead box protein N4 (FOXN4) from Homo sapiens (Human).